Reading from the N-terminus, the 337-residue chain is ATP-dependent (S)-NAD(P)H-hydrate dehydratase (337 aa).

Serine 6 bears the Phosphoserine mark. Residues 11-335 form the YjeF C-terminal domain; sequence IKLAQKRCIP…DRVGEVFAKL (325 aa). (6S)-NADPHX contacts are provided by residues glycine 121 and 182-188; that span reads NVVEFKR. Residues 218-222 and 240-249 each bind ATP; these read KGQSD and GSNKRVGGQG. The tract at residues 224-246 is disordered; that stretch reads IFSPDSEKDMLTNSEEGSNKRVG. Aspartate 250 is a binding site for (6S)-NADPHX.

It belongs to the NnrD/CARKD family. Requires Mg(2+) as cofactor.

It is found in the cytoplasm. The catalysed reaction is (6S)-NADHX + ATP = ADP + phosphate + NADH + H(+). The enzyme catalyses (6S)-NADPHX + ATP = ADP + phosphate + NADPH + H(+). Catalyzes the dehydration of the S-form of NAD(P)HX at the expense of ATP, which is converted to ADP. Together with NAD(P)HX epimerase, which catalyzes the epimerization of the S- and R-forms, the enzyme allows the repair of both epimers of NAD(P)HX, a damaged form of NAD(P)H that is a result of enzymatic or heat-dependent hydration. The chain is ATP-dependent (S)-NAD(P)H-hydrate dehydratase from Saccharomyces cerevisiae (strain ATCC 204508 / S288c) (Baker's yeast).